We begin with the raw amino-acid sequence, 895 residues long: Probable inorganic carbon transporter subunit DabA 1 (895 aa).

Cys-398, Asp-400, His-581, and Cys-596 together coordinate Zn(2+).

This sequence belongs to the inorganic carbon transporter (TC 9.A.2) DabA family. As to quaternary structure, forms a complex with DabB. Zn(2+) serves as cofactor.

The protein resides in the cell inner membrane. In terms of biological role, part of an energy-coupled inorganic carbon pump. The chain is Probable inorganic carbon transporter subunit DabA 1 from Rhodopirellula baltica (strain DSM 10527 / NCIMB 13988 / SH1).